Here is a 246-residue protein sequence, read N- to C-terminus: Small ribosomal subunit protein uS2 (246 aa).

This sequence belongs to the universal ribosomal protein uS2 family.

The polypeptide is Small ribosomal subunit protein uS2 (Pseudomonas paraeruginosa (strain DSM 24068 / PA7) (Pseudomonas aeruginosa (strain PA7))).